The sequence spans 113 residues: Hydrogenase maturation factor HypA (113 aa).

His2 contributes to the Ni(2+) binding site. Residues Cys73, Cys76, Cys89, and Cys92 each coordinate Zn(2+).

It belongs to the HypA/HybF family.

Functionally, involved in the maturation of [NiFe] hydrogenases. Required for nickel insertion into the metal center of the hydrogenase. This Rhodopseudomonas palustris (strain TIE-1) protein is Hydrogenase maturation factor HypA.